We begin with the raw amino-acid sequence, 549 residues long: DNA ligase 1 (549 aa).

An ATP-binding site is contributed by glutamate 212. Residue lysine 214 is the N6-AMP-lysine intermediate of the active site. Positions 219, 234, 264, 310, 387, and 393 each coordinate ATP.

Belongs to the ATP-dependent DNA ligase family. The cofactor is Mg(2+).

The enzyme catalyses ATP + (deoxyribonucleotide)n-3'-hydroxyl + 5'-phospho-(deoxyribonucleotide)m = (deoxyribonucleotide)n+m + AMP + diphosphate.. Functionally, DNA ligase that seals nicks in double-stranded DNA during DNA replication, DNA recombination and DNA repair. The protein is DNA ligase 1 of Methanosarcina barkeri (strain Fusaro / DSM 804).